An 860-amino-acid chain; its full sequence is Translation initiation factor IF-2 (860 aa).

Residues 1–11 show a composition bias toward basic and acidic residues; it reads MSDTKSGDDKT. Positions 1–265 are disordered; sequence MSDTKSGDDK…MRRRQEKFKR (265 aa). Residues 79-88 are compositionally biased toward low complexity; the sequence is AAPVVQEAPK. Basic and acidic residues predominate over residues 110–183; that stretch reads SRSEMEARRR…RRRAEEEARR (74 aa). A tr-type G domain is found at 358-525; it reads PRPPVVTIMG…AILLQAEILD (168 aa). The interval 367-374 is G1; that stretch reads GHVDHGKT. 367–374 lines the GTP pocket; the sequence is GHVDHGKT. The tract at residues 392-396 is G2; it reads GITQH. Residues 413–416 are G3; it reads DTPG. GTP is bound by residues 413–417 and 467–470; these read DTPGH and NKID. Positions 467-470 are G4; sequence NKID. The interval 503–505 is G5; sequence SAT.

Belongs to the TRAFAC class translation factor GTPase superfamily. Classic translation factor GTPase family. IF-2 subfamily.

It is found in the cytoplasm. In terms of biological role, one of the essential components for the initiation of protein synthesis. Protects formylmethionyl-tRNA from spontaneous hydrolysis and promotes its binding to the 30S ribosomal subunits. Also involved in the hydrolysis of GTP during the formation of the 70S ribosomal complex. In Mesorhizobium japonicum (strain LMG 29417 / CECT 9101 / MAFF 303099) (Mesorhizobium loti (strain MAFF 303099)), this protein is Translation initiation factor IF-2.